The following is a 413-amino-acid chain: Multifunctional CCA protein (413 aa).

ATP is bound by residues Gly-8 and Arg-11. Gly-8 and Arg-11 together coordinate CTP. Asp-21 and Asp-23 together coordinate Mg(2+). Positions 91, 137, and 140 each coordinate ATP. CTP is bound by residues Arg-91, Arg-137, and Arg-140. The region spanning 228–329 (TGKHTLLSLK…VSLFDKGDFW (102 aa)) is the HD domain.

Belongs to the tRNA nucleotidyltransferase/poly(A) polymerase family. Bacterial CCA-adding enzyme type 1 subfamily. As to quaternary structure, monomer. Can also form homodimers and oligomers. Mg(2+) serves as cofactor. Ni(2+) is required as a cofactor.

It catalyses the reaction a tRNA precursor + 2 CTP + ATP = a tRNA with a 3' CCA end + 3 diphosphate. The enzyme catalyses a tRNA with a 3' CCA end + 2 CTP + ATP = a tRNA with a 3' CCACCA end + 3 diphosphate. Its function is as follows. Catalyzes the addition and repair of the essential 3'-terminal CCA sequence in tRNAs without using a nucleic acid template. Adds these three nucleotides in the order of C, C, and A to the tRNA nucleotide-73, using CTP and ATP as substrates and producing inorganic pyrophosphate. tRNA 3'-terminal CCA addition is required both for tRNA processing and repair. Also involved in tRNA surveillance by mediating tandem CCA addition to generate a CCACCA at the 3' terminus of unstable tRNAs. While stable tRNAs receive only 3'-terminal CCA, unstable tRNAs are marked with CCACCA and rapidly degraded. The protein is Multifunctional CCA protein of Shewanella denitrificans (strain OS217 / ATCC BAA-1090 / DSM 15013).